Consider the following 101-residue polypeptide: MFDQTTHTEVHQLTVGKIETASGAIKPQLLRDAVKRAVTNFFAQMDGQEAEEVYEMVLSEVEAPLLDIIMQHTRGNQTRAANMLGINRGTLRKKLKKYGMN.

The segment at residues 77 to 96 is a DNA-binding region (H-T-H motif); sequence QTRAANMLGINRGTLRKKLK.

It belongs to the transcriptional regulatory Fis family. In terms of assembly, homodimer.

Activates ribosomal RNA transcription. Plays a direct role in upstream activation of rRNA promoters. The protein is DNA-binding protein Fis of Shewanella halifaxensis (strain HAW-EB4).